Here is an 89-residue protein sequence, read N- to C-terminus: Small ribosomal subunit protein uS14 (89 aa).

The protein belongs to the universal ribosomal protein uS14 family. In terms of assembly, part of the 30S ribosomal subunit. Contacts proteins S3 and S10.

Binds 16S rRNA, required for the assembly of 30S particles and may also be responsible for determining the conformation of the 16S rRNA at the A site. The chain is Small ribosomal subunit protein uS14 from Streptococcus pneumoniae serotype 2 (strain D39 / NCTC 7466).